The sequence spans 348 residues: Holliday junction branch migration complex subunit RuvB (348 aa).

Residues 4–186 (TDRIISANTV…FGIIQRLEFY (183 aa)) form a large ATPase domain (RuvB-L) region. Residues Ile-25, Arg-26, Gly-67, Lys-70, Thr-71, Thr-72, 133–135 (EDY), Arg-176, Tyr-186, and Arg-223 each bind ATP. Thr-71 contributes to the Mg(2+) binding site. The tract at residues 187-257 (SVDDLAKIVY…IADKALTMLK (71 aa)) is small ATPAse domain (RuvB-S). Positions 260–348 (PVGFDHMDHK…SSDQQQNLSL (89 aa)) are head domain (RuvB-H). Arg-315 and Arg-320 together coordinate DNA.

The protein belongs to the RuvB family. In terms of assembly, homohexamer. Forms an RuvA(8)-RuvB(12)-Holliday junction (HJ) complex. HJ DNA is sandwiched between 2 RuvA tetramers; dsDNA enters through RuvA and exits via RuvB. An RuvB hexamer assembles on each DNA strand where it exits the tetramer. Each RuvB hexamer is contacted by two RuvA subunits (via domain III) on 2 adjacent RuvB subunits; this complex drives branch migration. In the full resolvosome a probable DNA-RuvA(4)-RuvB(12)-RuvC(2) complex forms which resolves the HJ.

The protein resides in the cytoplasm. The catalysed reaction is ATP + H2O = ADP + phosphate + H(+). Functionally, the RuvA-RuvB-RuvC complex processes Holliday junction (HJ) DNA during genetic recombination and DNA repair, while the RuvA-RuvB complex plays an important role in the rescue of blocked DNA replication forks via replication fork reversal (RFR). RuvA specifically binds to HJ cruciform DNA, conferring on it an open structure. The RuvB hexamer acts as an ATP-dependent pump, pulling dsDNA into and through the RuvAB complex. RuvB forms 2 homohexamers on either side of HJ DNA bound by 1 or 2 RuvA tetramers; 4 subunits per hexamer contact DNA at a time. Coordinated motions by a converter formed by DNA-disengaged RuvB subunits stimulates ATP hydrolysis and nucleotide exchange. Immobilization of the converter enables RuvB to convert the ATP-contained energy into a lever motion, pulling 2 nucleotides of DNA out of the RuvA tetramer per ATP hydrolyzed, thus driving DNA branch migration. The RuvB motors rotate together with the DNA substrate, which together with the progressing nucleotide cycle form the mechanistic basis for DNA recombination by continuous HJ branch migration. Branch migration allows RuvC to scan DNA until it finds its consensus sequence, where it cleaves and resolves cruciform DNA. This chain is Holliday junction branch migration complex subunit RuvB, found in Francisella philomiragia subsp. philomiragia (strain ATCC 25017 / CCUG 19701 / FSC 153 / O#319-036).